The sequence spans 254 residues: tRNA (guanine-N(7)-)-methyltransferase (254 aa).

The tract at residues 1 to 34 (MNTNTPAHPPEGAPLSEATQAALASAEHAPDSPG) is disordered. The S-adenosyl-L-methionine site is built by E87, E112, D139, and D162. D162 is a catalytic residue. Substrate contacts are provided by residues K166, D198, and 233 to 236 (TKFE).

The protein belongs to the class I-like SAM-binding methyltransferase superfamily. TrmB family.

The enzyme catalyses guanosine(46) in tRNA + S-adenosyl-L-methionine = N(7)-methylguanosine(46) in tRNA + S-adenosyl-L-homocysteine. The protein operates within tRNA modification; N(7)-methylguanine-tRNA biosynthesis. Functionally, catalyzes the formation of N(7)-methylguanine at position 46 (m7G46) in tRNA. This is tRNA (guanine-N(7)-)-methyltransferase from Bordetella pertussis (strain Tohama I / ATCC BAA-589 / NCTC 13251).